The sequence spans 449 residues: Sensor histidine protein kinase/phosphatase WalK (449 aa).

The Extracellular segment spans residues 1–13 (MLDLLKQTIFTRD). Residues 14–34 (FIFILILLGFILVVTLLLLEN) form a helical membrane-spanning segment. The HAMP domain maps to 35 to 87 (RRDNIQLKQINQKVKDLIAGDYSKVLDMQGGSEITNITNNLNDLSEVIRLTQE). At 35–449 (RRDNIQLKQI…EEVWEDEVED (415 aa)) the chain is on the cytoplasmic side. One can recognise a PAS domain in the interval 92–158 (ESKRLNSILF…YELRDLITQS (67 aa)). One can recognise a PAC domain in the interval 157–211 (QSPELLLDSQDINGEYLNLRVRFALIRRESGFISGLVAVLHDTTEQEKEERERRL). A Histidine kinase domain is found at 215–435 (NVSHELRTPL…TFTIVLPYDK (221 aa)). His218 carries the phosphohistidine modification.

In terms of assembly, may form homodimers. May interact with serine/threonine-protein kinase StkP; the interaction may play a role in regulating Walk signal transduction. Autophosphorylated.

The protein resides in the membrane. It carries out the reaction ATP + protein L-histidine = ADP + protein N-phospho-L-histidine.. Member of the two-component regulatory system WalK/WalR that regulates genes involved in cell wall metabolism. Functions as a sensor protein kinase which is autophosphorylated at a histidine residue and transfers its phosphate group to WalR. In turn, WalR binds to the upstream promoter regions of target genes to positively and negatively regulate their expression. Required to maintain expression of WalRK regulon genes in exponentially growing cells, including peptidoglycan hydrolase pcsB. Phosphorylates WalR and also capable of dephosphorylation of WalR. WalK phosphatase activity is probably involved in preventing cross-talk from PnpS and other non-cognate sensor kinases during exponential growth. May be considered a potential virulence factor. The protein is Sensor histidine protein kinase/phosphatase WalK of Streptococcus pneumoniae serotype 2 (strain D39 / NCTC 7466).